Reading from the N-terminus, the 188-residue chain is Ribosome-recycling factor (188 aa).

It belongs to the RRF family.

It is found in the cytoplasm. In terms of biological role, responsible for the release of ribosomes from messenger RNA at the termination of protein biosynthesis. May increase the efficiency of translation by recycling ribosomes from one round of translation to another. The chain is Ribosome-recycling factor from Bradyrhizobium diazoefficiens (strain JCM 10833 / BCRC 13528 / IAM 13628 / NBRC 14792 / USDA 110).